A 694-amino-acid chain; its full sequence is Inactive protein-arginine deiminase type-6 (694 aa).

Phosphoserine occurs at positions 10 and 446.

It belongs to the protein arginine deiminase family. In terms of assembly, homodimers. Associates with alpha-tubulin. Post-translationally, phosphorylation at Ser-10, possibly by RSK-type kinases, and Ser-446 creates binding sites for 14-3-3 proteins. In terms of tissue distribution, highly expressed in oocytes and weakly expressed in other somatic tissues.

It localises to the cytoplasm. The protein localises to the cytoplasmic vesicle. It is found in the secretory vesicle. Its subcellular location is the cortical granule. The protein resides in the nucleus. Functionally, structural constituent of cytoplasmic lattices, which plays a key role in early embryonic development. Cytoplasmic lattices consist in fibrous structures found in the cytoplasm of oocytes and preimplantation embryos. They are required to store maternal proteins critical for embryonic development, such as ribosomal proteins and proteins that control epigenetic reprogramming of the preimplantation embryo, and prevent their degradation or activation. In contrast to other members of the family, does not show protein-arginine deiminase activity due to its inability to bind Ca(2+). The chain is Inactive protein-arginine deiminase type-6 from Homo sapiens (Human).